Here is a 273-residue protein sequence, read N- to C-terminus: MPELPEVETLKNSLKDKLIGLIIENVELKRDNLRYKLSPLLATETLNTNILDVRRRAKYLIIDFNNDYSLIVHLGMSGRFTLQSANYKTQKHDHVIFDLSNGEKLIFNDTRRFGMIYSFKTDLLEKEFLNDLGIEPFSDLLTLEYLKDKLQTKKIPIKNLIMDNRVIVGVGNIYASESLHLARIHPDKSGNNLRDDEIENLIKAIRDVLTKAITAGGTTLKDFVNGDNKPGYFTKQLKVYGREGQSCLSCSSTIIKIKHSGRSTFYCKTCQYS.

The active-site Schiff-base intermediate with DNA is the Pro-2. Catalysis depends on Glu-3, which acts as the Proton donor. Lys-58 acts as the Proton donor; for beta-elimination activity in catalysis. 3 residues coordinate DNA: His-92, Arg-111, and Lys-153. The FPG-type zinc finger occupies 238–272; the sequence is KVYGREGQSCLSCSSTIIKIKHSGRSTFYCKTCQY. The active-site Proton donor; for delta-elimination activity is Arg-262.

Belongs to the FPG family. Monomer. It depends on Zn(2+) as a cofactor.

It catalyses the reaction Hydrolysis of DNA containing ring-opened 7-methylguanine residues, releasing 2,6-diamino-4-hydroxy-5-(N-methyl)formamidopyrimidine.. The enzyme catalyses 2'-deoxyribonucleotide-(2'-deoxyribose 5'-phosphate)-2'-deoxyribonucleotide-DNA = a 3'-end 2'-deoxyribonucleotide-(2,3-dehydro-2,3-deoxyribose 5'-phosphate)-DNA + a 5'-end 5'-phospho-2'-deoxyribonucleoside-DNA + H(+). Its function is as follows. Involved in base excision repair of DNA damaged by oxidation or by mutagenic agents. Acts as a DNA glycosylase that recognizes and removes damaged bases. Has a preference for oxidized purines, such as 7,8-dihydro-8-oxoguanine (8-oxoG). Has AP (apurinic/apyrimidinic) lyase activity and introduces nicks in the DNA strand. Cleaves the DNA backbone by beta-delta elimination to generate a single-strand break at the site of the removed base with both 3'- and 5'-phosphates. This chain is Formamidopyrimidine-DNA glycosylase, found in Rickettsia conorii (strain ATCC VR-613 / Malish 7).